A 499-amino-acid polypeptide reads, in one-letter code: Lysine--tRNA ligase (499 aa).

Residues Glu408 and Glu415 each coordinate Mg(2+).

The protein belongs to the class-II aminoacyl-tRNA synthetase family. Homodimer. Mg(2+) is required as a cofactor.

Its subcellular location is the cytoplasm. It catalyses the reaction tRNA(Lys) + L-lysine + ATP = L-lysyl-tRNA(Lys) + AMP + diphosphate. The chain is Lysine--tRNA ligase from Thermoanaerobacter sp. (strain X514).